We begin with the raw amino-acid sequence, 171 residues long: S-ribosylhomocysteine lyase (171 aa).

The Fe cation site is built by H54, H58, and C128.

The protein belongs to the LuxS family. As to quaternary structure, homodimer. It depends on Fe cation as a cofactor.

It catalyses the reaction S-(5-deoxy-D-ribos-5-yl)-L-homocysteine = (S)-4,5-dihydroxypentane-2,3-dione + L-homocysteine. Functionally, involved in the synthesis of autoinducer 2 (AI-2) which is secreted by bacteria and is used to communicate both the cell density and the metabolic potential of the environment. The regulation of gene expression in response to changes in cell density is called quorum sensing. Catalyzes the transformation of S-ribosylhomocysteine (RHC) to homocysteine (HC) and 4,5-dihydroxy-2,3-pentadione (DPD). In Campylobacter curvus (strain 525.92), this protein is S-ribosylhomocysteine lyase.